The sequence spans 741 residues: Subtilisin-like protease SBT4.4 (741 aa).

The first 24 residues, 1 to 24 (MAKGTTFIFLFSSLLVLSLSSVSA), serve as a signal peptide directing secretion. Residues 25–112 (DKDDHGDQQV…VFPSRKLKLQ (88 aa)) constitute a propeptide, activation peptide. The Inhibitor I9 domain occupies 34–111 (VYIVYLGSLP…SVFPSRKLKL (78 aa)). Positions 116-589 (SWNFMGLKEG…SGHVDPIDAI (474 aa)) constitute a Peptidase S8 domain. Asp144 acts as the Charge relay system in catalysis. Asn175 and Asn195 each carry an N-linked (GlcNAc...) asparagine glycan. The Charge relay system role is filled by His204. 2 N-linked (GlcNAc...) asparagine glycosylation sites follow: Asn227 and Asn357. The region spanning 359–445 (TNYPLVYGKS…LSNDDYKSLV (87 aa)) is the PA domain. N-linked (GlcNAc...) asparagine glycosylation occurs at Asn449. The Charge relay system role is filled by Ser528. Asn565, Asn610, Asn623, and Asn654 each carry an N-linked (GlcNAc...) asparagine glycan.

It belongs to the peptidase S8 family. In terms of processing, the C-terminal propeptide is autocleaved.

The protein localises to the secreted. The polypeptide is Subtilisin-like protease SBT4.4 (Arabidopsis thaliana (Mouse-ear cress)).